Reading from the N-terminus, the 154-residue chain is Myoglobin (154 aa).

In terms of domain architecture, Globin spans 2 to 148 (GLSDQEWQQV…FRNDMASKYK (147 aa)). Residue His65 participates in nitrite binding. His65 is a binding site for O2. A heme b-binding site is contributed by His94.

Belongs to the globin family. Monomeric.

It is found in the cytoplasm. It localises to the sarcoplasm. It catalyses the reaction Fe(III)-heme b-[protein] + nitric oxide + H2O = Fe(II)-heme b-[protein] + nitrite + 2 H(+). It carries out the reaction H2O2 + AH2 = A + 2 H2O. Monomeric heme protein which primary function is to store oxygen and facilitate its diffusion within muscle tissues. Reversibly binds oxygen through a pentacoordinated heme iron and enables its timely and efficient release as needed during periods of heightened demand. Depending on the oxidative conditions of tissues and cells, and in addition to its ability to bind oxygen, it also has a nitrite reductase activity whereby it regulates the production of bioactive nitric oxide. Under stress conditions, like hypoxia and anoxia, it also protects cells against reactive oxygen species thanks to its pseudoperoxidase activity. This Aethia pygmaea (Whiskered auklet) protein is Myoglobin (MB).